The primary structure comprises 270 residues: MWNSGFESYGSSSYGGAGGYTQSPGGFGSPAPSQAEKKSRARAQHIVPCTISQLLSATLVDEVFRIGNVEISQVTIVGIIRHAEKAPTNIVYKIDDMTAAPMDVRQWVDTDDASSENTVVPPETYVKVAGHLRSFQNKKSLVAFKIMPLEDMNEFTTHILEVINAHMVLSKANSQPSAGRAPISNPGMSEAGNFGGNSFMPANGLTVAQNQVLNLIKACPRPEGLNFQDLKNQLKHMSVSSVKQAMDFLSNEGHIYSTVDDDHFKSTDAE.

Position 1 is an N-acetylmethionine (M1). Phosphoserine; by PRKDC is present on residues S4 and S8. T21 carries the phosphothreonine; by PRKDC modification. The tract at residues 21-40 (TQSPGGFGSPAPSQAEKKSR) is disordered. S23 carries the phosphoserine; by CDK2 modification. S29 bears the Phosphoserine; by CDK1 mark. Phosphoserine; by PRKDC is present on S33. Residues K37 and K38 each participate in a glycyl lysine isopeptide (Lys-Gly) (interchain with G-Cter in ubiquitin) cross-link. Positions 74–148 (VTIVGIIRHA…KSLVAFKIMP (75 aa)) form a DNA-binding region, OB. Residues 187–270 (GMSEAGNFGG…DDHFKSTDAE (84 aa)) form an interaction with RAD52, TIPIN, UNG and XPA region.

It belongs to the replication factor A protein 2 family. Component of the replication protein A complex (RPA/RP-A), a heterotrimeric complex composed of RPA1, RPA2 and RPA3. Interacts with PRPF19; the PRP19-CDC5L complex is recruited to the sites of DNA repair where it ubiquitinates the replication protein A complex (RPA). Interacts with SERTAD3. Interacts with TIPIN. Interacts with TIMELESS. Interacts with PPP4R2; the interaction is direct, DNA damage-dependent and mediates the recruitment of the PP4 catalytic subunit PPP4C. Interacts (hyperphosphorylated) with RAD51. Interacts with SMARCAL1; the interaction is direct and mediates the recruitment to the RPA complex of SMARCAL1. Interacts with RAD52 and XPA; those interactions are direct and associate RAD52 and XPA to the RPA complex. Interacts with FBH1. Interacts with ETAA1; the interaction is direct and promotes ETAA1 recruitment at stalled replication forks. Interacts with DDI2. Interacts (in unphosphorylated form via N-terminus) with EIF4EBP3; the interaction enhances EIF4EBP3-mediated inhibition of EIF4E-mediated mRNA nuclear export. Post-translationally, differentially phosphorylated throughout the cell cycle, becoming phosphorylated at the G1-S transition and dephosphorylated in late mitosis. Mainly phosphorylated at Ser-23 and Ser-29, by cyclin A-CDK2 and cyclin B-CDK1, respectively during DNA replication and mitosis. Dephosphorylation may require the serine/threonine-protein phosphatase 4. Phosphorylation at Ser-23 and Ser-29 is a prerequisite for further phosphorylation. Becomes hyperphosphorylated on additional residues including Ser-4, Ser-8, Thr-21 and Ser-33 in response to DNA damage. Hyperphosphorylation is mediated by ATM, ATR and PRKDC. Primarily recruited to DNA repair nuclear foci as a hypophosphorylated form it undergoes subsequent hyperphosphorylation, catalyzed by ATR. Hyperphosphorylation is required for RAD51 recruitment to chromatin and efficient DNA repair. Phosphorylation at Thr-21 depends upon RFWD3 presence. In terms of processing, DNA damage-induced 'Lys-63'-linked polyubiquitination by PRPF19 mediates ATRIP recruitment to the RPA complex at sites of DNA damage and activation of ATR. Ubiquitinated by RFWD3 at stalled replication forks in response to DNA damage: ubiquitination by RFWD3 does not lead to degradation by the proteasome and promotes removal of the RPA complex from stalled replication forks, promoting homologous recombination.

The protein resides in the nucleus. Its subcellular location is the PML body. Its function is as follows. As part of the heterotrimeric replication protein A complex (RPA/RP-A), binds and stabilizes single-stranded DNA intermediates, that form during DNA replication or upon DNA stress. It prevents their reannealing and in parallel, recruits and activates different proteins and complexes involved in DNA metabolism. Thereby, it plays an essential role both in DNA replication and the cellular response to DNA damage. In the cellular response to DNA damage, the RPA complex controls DNA repair and DNA damage checkpoint activation. Through recruitment of ATRIP activates the ATR kinase a master regulator of the DNA damage response. It is required for the recruitment of the DNA double-strand break repair factors RAD51 and RAD52 to chromatin in response to DNA damage. Also recruits to sites of DNA damage proteins like XPA and XPG that are involved in nucleotide excision repair and is required for this mechanism of DNA repair. Also plays a role in base excision repair (BER) probably through interaction with UNG. Also recruits SMARCAL1/HARP, which is involved in replication fork restart, to sites of DNA damage. May also play a role in telomere maintenance. In Pongo abelii (Sumatran orangutan), this protein is Replication protein A 32 kDa subunit (RPA2).